The primary structure comprises 360 residues: Histidinol-phosphate aminotransferase (360 aa).

K208 bears the N6-(pyridoxal phosphate)lysine mark.

This sequence belongs to the class-II pyridoxal-phosphate-dependent aminotransferase family. Histidinol-phosphate aminotransferase subfamily. In terms of assembly, homodimer. Pyridoxal 5'-phosphate serves as cofactor.

It catalyses the reaction L-histidinol phosphate + 2-oxoglutarate = 3-(imidazol-4-yl)-2-oxopropyl phosphate + L-glutamate. The protein operates within amino-acid biosynthesis; L-histidine biosynthesis; L-histidine from 5-phospho-alpha-D-ribose 1-diphosphate: step 7/9. The polypeptide is Histidinol-phosphate aminotransferase (hisC) (Lactococcus lactis subsp. lactis (strain IL1403) (Streptococcus lactis)).